A 314-amino-acid chain; its full sequence is MSSKANHAKTVICGIINVTPDSFSDGGQFFALEQALQQARKLIAEGASMLDIGGESTRPGSSYVEIEEEIQRVVPVIKAIRKESDVLISIDTWKSQVAEAALAAGADLVNDITGLMGDEKMPHVVAEARAQVVIMFNPVMARPQHPSSLIFPHFGFGQAFTEEELADFETLPIEELMEAFFERALARAAEAGIAPENILLDPGIGFGLTKKENLLLLRDLDKLHQKGYPIFLGVSRKRFVINILEENGFEVNPETELGFRNRDTASAHVTSIAARQGVEVVRVHDVASHRMAVEIASAIRLADEAENLDLKQYK.

One can recognise a Pterin-binding domain in the interval 10 to 294 (TVICGIINVT…DVASHRMAVE (285 aa)). Position 17 (asparagine 17) interacts with Mg(2+). (7,8-dihydropterin-6-yl)methyl diphosphate contacts are provided by residues aspartate 91, asparagine 110, aspartate 201, lysine 237, and 282–284 (RVH).

This sequence belongs to the DHPS family. Homodimer. Mg(2+) is required as a cofactor.

The enzyme catalyses (7,8-dihydropterin-6-yl)methyl diphosphate + 4-aminobenzoate = 7,8-dihydropteroate + diphosphate. The protein operates within cofactor biosynthesis; tetrahydrofolate biosynthesis; 7,8-dihydrofolate from 2-amino-4-hydroxy-6-hydroxymethyl-7,8-dihydropteridine diphosphate and 4-aminobenzoate: step 1/2. Is potently inhibited by sulfonamides, with Ki values between 25 nM and 850 nM. Its function is as follows. Catalyzes the condensation of para-aminobenzoate (pABA) with 6-hydroxymethyl-7,8-dihydropterin diphosphate (DHPt-PP) to form 7,8-dihydropteroate, the immediate precursor of folate derivatives. Is the target for the sulfonamide group of antimicrobial drugs. Sulfonamide drugs act as pABA analogs, they inhibit the reaction by acting as alternative substrates, leading to a 'dead end' sulfa-pterin product. The polypeptide is Dihydropteroate synthase (sulA) (Streptococcus pneumoniae (strain ATCC BAA-255 / R6)).